A 1465-amino-acid chain; its full sequence is DNA polymerase III PolC-type (1465 aa).

The region spanning 427–583 (YVVFDVETTG…YDAEATGRLL (157 aa)) is the Exonuclease domain.

The protein belongs to the DNA polymerase type-C family. PolC subfamily.

The protein resides in the cytoplasm. It catalyses the reaction DNA(n) + a 2'-deoxyribonucleoside 5'-triphosphate = DNA(n+1) + diphosphate. Its function is as follows. Required for replicative DNA synthesis. This DNA polymerase also exhibits 3' to 5' exonuclease activity. In Streptococcus pyogenes serotype M1, this protein is DNA polymerase III PolC-type.